The sequence spans 1093 residues: NACHT, LRR and PYD domains-containing protein 14 (1093 aa).

The region spanning 1–97 (MADSSSSSFF…CERAKEEINW (97 aa)) is the Pyrin domain. The tract at residues 102-121 (IGPDDAKAGETQEDQEAVLG) is disordered. The NACHT domain occupies 177-499 (QIVVLQGAAG…MFYMLKGSWE (323 aa)). Residue 183–190 (GAAGVGKT) participates in ATP binding. LRR repeat units follow at residues 730–750 (NLMHLDLKGSDIGDNGVKSLC), 759–780 (KLQTLRLESCNLTVFCCLNISN), 787–807 (SLIFLNLSTNNLLDDGVQLLC), 816–836 (YLERLSLESCGLTEAGCEYLS), 844–864 (RLTHLCLADNVLGDGGVKLMS), 873–894 (TLKSLVLRRCHFTSLSSEYLST), 901–921 (SLTHLDLGSNWLQDNGVKLLC), 930–951 (NLQDLELMGCVLTNACCLDLAS), 958–978 (NLRSLDLGNNDLQDDGVKILC), 987–1008 (NIQRLGLEYCGLTSLCCQDLSS), and 1015–1035 (RLIKMNLTQNTLGYEGIVKLY).

This sequence belongs to the NLRP family. As to expression, testis-specific.

The protein localises to the cytoplasm. Its function is as follows. May be involved in inflammation and spermatogenesis. This Homo sapiens (Human) protein is NACHT, LRR and PYD domains-containing protein 14 (NLRP14).